Consider the following 182-residue polypeptide: ATP-dependent protease subunit HslV (182 aa).

T12 is a catalytic residue. Positions 167, 170, and 173 each coordinate Na(+).

It belongs to the peptidase T1B family. HslV subfamily. In terms of assembly, a double ring-shaped homohexamer of HslV is capped on each side by a ring-shaped HslU homohexamer. The assembly of the HslU/HslV complex is dependent on binding of ATP.

Its subcellular location is the cytoplasm. It catalyses the reaction ATP-dependent cleavage of peptide bonds with broad specificity.. With respect to regulation, allosterically activated by HslU binding. Protease subunit of a proteasome-like degradation complex believed to be a general protein degrading machinery. In Paramagnetospirillum magneticum (strain ATCC 700264 / AMB-1) (Magnetospirillum magneticum), this protein is ATP-dependent protease subunit HslV.